The following is a 396-amino-acid chain: Elongation factor Tu (396 aa).

Positions 10 to 206 (KPHVNVGTIG…ALDTYIPTPE (197 aa)) constitute a tr-type G domain. The tract at residues 19–26 (GHVDHGKT) is G1. 19–26 (GHVDHGKT) is a binding site for GTP. Thr26 serves as a coordination point for Mg(2+). Residues 60 to 64 (GITIN) form a G2 region. A G3 region spans residues 81 to 84 (DCPG). Residues 81 to 85 (DCPGH) and 136 to 139 (NKAD) each bind GTP. Residues 136–139 (NKAD) form a G4 region. The segment at 174-176 (SAK) is G5.

The protein belongs to the TRAFAC class translation factor GTPase superfamily. Classic translation factor GTPase family. EF-Tu/EF-1A subfamily. As to quaternary structure, monomer.

It localises to the cytoplasm. It catalyses the reaction GTP + H2O = GDP + phosphate + H(+). GTP hydrolase that promotes the GTP-dependent binding of aminoacyl-tRNA to the A-site of ribosomes during protein biosynthesis. In Bordetella bronchiseptica (strain ATCC BAA-588 / NCTC 13252 / RB50) (Alcaligenes bronchisepticus), this protein is Elongation factor Tu.